A 249-amino-acid chain; its full sequence is DNA repair protein RecO (249 aa).

The protein belongs to the RecO family.

Its function is as follows. Involved in DNA repair and RecF pathway recombination. The protein is DNA repair protein RecO of Mycoplasma mycoides subsp. mycoides SC (strain CCUG 32753 / NCTC 10114 / PG1).